The following is a 436-amino-acid chain: UPF0597 protein YhaM (436 aa).

Belongs to the UPF0597 family.

The sequence is that of UPF0597 protein YhaM from Escherichia coli O127:H6 (strain E2348/69 / EPEC).